The chain runs to 130 residues: Histone H2A.2 (130 aa).

Residues lysine 4 and lysine 6 each carry the N6-acetyllysine modification. Glutamine 104 bears the N5-methylglutamine mark. Residue lysine 125 forms a Glycyl lysine isopeptide (Lys-Gly) (interchain with G-Cter in SUMO) linkage. At serine 127 the chain carries Phosphoserine. A [ST]-Q motif motif is present at residues serine 127–glutamine 128.

Belongs to the histone H2A family. In terms of assembly, the nucleosome is a histone octamer containing two molecules each of H2A, H2B, H3 and H4 assembled in one H3-H4 heterotetramer and two H2A-H2B heterodimers. The octamer wraps approximately 147 bp of DNA. Phosphorylated to form H2AS128ph (gamma-H2A) in response to DNA double-strand breaks (DSBs) generated by exogenous genotoxic agents and by stalled replication forks. Phosphorylation is dependent on the DNA damage checkpoint kinases MEC1/ATR and TEL1/ATM, spreads on either side of a detected DSB site and may mark the surrounding chromatin for recruitment of proteins required for DNA damage signaling and repair. Gamma-H2A is removed from the DNA prior to the strand invasion-primer extension step of the repair process and subsequently dephosphorylated. Dephosphorylation is necessary for efficient recovery from the DNA damage checkpoint. Post-translationally, acetylated by ESA1 to form H2AK4ac and H2AK7ac.

Its subcellular location is the nucleus. It is found in the chromosome. In terms of biological role, core component of nucleosome which plays a central role in DNA double strand break (DSB) repair. Nucleosomes wrap and compact DNA into chromatin, limiting DNA accessibility to the cellular machineries which require DNA as a template. Histones thereby play a central role in transcription regulation, DNA repair, DNA replication and chromosomal stability. DNA accessibility is regulated via a complex set of post-translational modifications of histones, also called histone code, and nucleosome remodeling. This Meyerozyma guilliermondii (strain ATCC 6260 / CBS 566 / DSM 6381 / JCM 1539 / NBRC 10279 / NRRL Y-324) (Yeast) protein is Histone H2A.2 (HTA2).